A 377-amino-acid polypeptide reads, in one-letter code: MSPPNQSLEGLLQEASNRSLNATETPEAWGPETLQALKISLALLLSIITMATALSNAFVLTTIFLTRKLHTPANYLIGSLAMTDLLVSILVMPISIAYTTTRTWSFGQILCDIWLSSDITCCTASILHLCVIALDRYWAITDALEYSKRRTAGRAAVMIATVWVISICISIPPLFWRQAKAQEDMSDCQVNTSQISYTIYSTCGAFYIPSVLLIILYGRIYVAARNRILNPPSLYGKRFTTAQLITGSAGSSLCSLSPSLQEERSHAAGPPLFFNHVQVKLAEGVLERKRISAARERKATKTLGIILGAFIVCWLPFFVASLVLPICRASCWLHPALFDFFTWLGYLNSLINPIIYTVFNEEFRQAFQRVVHVRKAS.

Residues Asn-5, Asn-17, and Asn-21 are each glycosylated (N-linked (GlcNAc...) asparagine). The next 3 helical transmembrane spans lie at 39 to 64, 76 to 97, and 110 to 134; these read ISLA…TTIF, LIGS…ISIA, and LCDI…VIAL. An intrachain disulfide couples Cys-111 to Cys-188. Positions 118 and 122 each coordinate serotonin. A DRY motif; important for ligand-induced conformation changes motif is present at residues 135-137; the sequence is DRY. 4 helical membrane-spanning segments follow: residues 155 to 176, 195 to 218, 301 to 326, and 336 to 359; these read AAVM…PLFW, ISYT…ILYG, KTLG…VLPI, and ALFD…YTVF. Residue Ser-321 participates in serotonin binding. Positions 352-356 match the NPxxY motif; important for ligand-induced conformation changes and signaling motif; sequence NPIIY.

Belongs to the G-protein coupled receptor 1 family. Homodimer. Heterodimer with HTR1B.

Its subcellular location is the cell membrane. G-protein coupled receptor for 5-hydroxytryptamine (serotonin). Also functions as a receptor for ergot alkaloid derivatives, various anxiolytic and antidepressant drugs and other psychoactive substances. Ligand binding causes a conformation change that triggers signaling via guanine nucleotide-binding proteins (G proteins) and modulates the activity of downstream effectors, such as adenylate cyclase. HTR1D is coupled to G(i)/G(o) G alpha proteins and mediates inhibitory neurotransmission by inhibiting adenylate cyclase activity. Regulates the release of 5-hydroxytryptamine in the brain, and thereby affects neural activity. May also play a role in regulating the release of other neurotransmitters. May play a role in vasoconstriction. The polypeptide is 5-hydroxytryptamine receptor 1D (HTR1D) (Canis lupus familiaris (Dog)).